The primary structure comprises 475 residues: Erythroid membrane-associated protein (475 aa).

The N-terminal stretch at 1-29 (MEMASSAGSWLSGCLIPLVFLRLSVHVSG) is a signal peptide. The region spanning 30–140 (HAGDAGKFHV…GNLSKEDTVI (111 aa)) is the Ig-like V-type domain. The Extracellular portion of the chain corresponds to 30–155 (HAGDAGKFHV…PSVGSLSPSA (126 aa)). Cysteine 50 and cysteine 126 are disulfide-bonded. The N-linked (GlcNAc...) asparagine glycan is linked to asparagine 132. Residues 156-176 (VALAVILPVLVLLIMVCLCLI) form a helical membrane-spanning segment. Residues 177–475 (WKQRRAKEKL…ALQELKAPSF (299 aa)) are Cytoplasmic-facing. Residues 220 to 418 (KLKRAAANSG…LVICSELHKS (199 aa)) form the B30.2/SPRY domain. The residue at position 418 (serine 418) is a Phosphoserine.

This sequence belongs to the immunoglobulin superfamily. BTN/MOG family. Post-translationally, glycosylated. As to expression, expressed in erythroid-enriched bone marrow (at protein level). Highly expressed in bone marrow and to a lower extent in leukocytes, thymus, lymph node and spleen.

It is found in the cell membrane. It localises to the cytoplasm. Possible role as a cell-adhesion or receptor molecule of erythroid cells. The sequence is that of Erythroid membrane-associated protein (ERMAP) from Homo sapiens (Human).